A 351-amino-acid chain; its full sequence is MLKRQLHSASKRSATRFSDALNKGPSFDDFLTGRAGKAAAVDPVLAASSDGKRLPKWLKTEIPKGKNLHNIREDLRGLGLHTVCEEARCPNIGECWGGSDKSKATATIMLMGDTCTRGCRFCSVKTNRNPGPLDPNEPENTAVAISKWGLGYVVLTTVDRDDLSDGGSWHFADTVKRIKEKAPHILVETLSGDFRGNLDHVTTLAESGLDVFAHNMETVEALTPFVRDRRATFQQSLSVLRQAKVAVPDLITKTSIMLGFGETDEQVEDTLMQLRGVGVDIVTFGQYMRPTIRHLKVAEYVTPEKFDYWQKRAMDMGFLYCASGPLVRSSYKAGEVFIENVLKKRNAAKAV.

C84, C89, C95, C115, C119, C122, and S330 together coordinate [4Fe-4S] cluster. Residues 100–319 form the Radical SAM core domain; the sequence is DKSKATATIM…QKRAMDMGFL (220 aa).

This sequence belongs to the radical SAM superfamily. Lipoyl synthase family. [4Fe-4S] cluster serves as cofactor.

The protein localises to the mitochondrion. The catalysed reaction is [[Fe-S] cluster scaffold protein carrying a second [4Fe-4S](2+) cluster] + N(6)-octanoyl-L-lysyl-[protein] + 2 oxidized [2Fe-2S]-[ferredoxin] + 2 S-adenosyl-L-methionine + 4 H(+) = [[Fe-S] cluster scaffold protein] + N(6)-[(R)-dihydrolipoyl]-L-lysyl-[protein] + 4 Fe(3+) + 2 hydrogen sulfide + 2 5'-deoxyadenosine + 2 L-methionine + 2 reduced [2Fe-2S]-[ferredoxin]. It functions in the pathway protein modification; protein lipoylation via endogenous pathway; protein N(6)-(lipoyl)lysine from octanoyl-[acyl-carrier-protein]: step 2/2. Its function is as follows. Catalyzes the radical-mediated insertion of two sulfur atoms into the C-6 and C-8 positions of the octanoyl moiety bound to the lipoyl domains of lipoate-dependent enzymes, thereby converting the octanoylated domains into lipoylated derivatives. The chain is Lipoyl synthase, mitochondrial from Yarrowia lipolytica (strain CLIB 122 / E 150) (Yeast).